The sequence spans 340 residues: uncharacterized protein (340 aa).

Residues 1-20 (MGGARRLKLDGSIPNQLARA) form the signal peptide.

This is an uncharacterized protein from Mycobacterium tuberculosis (strain CDC 1551 / Oshkosh).